The following is a 452-amino-acid chain: Tripartite motif-containing protein 51G (452 aa).

Residues 15–56 (CPICMNYFIDPVTIDCGHSFCRPCFYLNWQDMAVLAQCSKCK) form an RING-type zinc finger. The B box-type zinc-finger motif lies at 88-129 (SEEQICGTHRETKEMFCEVDKSLLCLLCSNSQEHRNHRHCPT). 4 residues coordinate Zn(2+): Cys-93, His-96, Cys-115, and His-121. The B30.2/SPRY domain maps to 269–452 (EFSAGPIIGL…LWPIICCSHF (184 aa)).

Belongs to the TRIM/RBCC family.

This chain is Tripartite motif-containing protein 51G, found in Homo sapiens (Human).